Consider the following 167-residue polypeptide: UTP pyrophosphatase (167 aa).

It catalyses the reaction UTP + H2O = UMP + diphosphate + H(+). Functionally, specifically catalyzes the hydrolysis of UTP to UMP and diphosphate in vitro, albeit at apparently slow rate. Shows no activity towards ATP, GTP, CTP, dTTP and ITP as substrates. The protein is UTP pyrophosphatase of Escherichia coli (strain K12).